Consider the following 425-residue polypeptide: MLNIKWIRENQELFDEKLSQRFIEPMSSKIAMLDEEKRKITSLIQEFQHARRVKSKILGNMTSKSSEEFEGLQRDVKHINEKLEELEKDLNNNNELNELLNMLPNIPDDEVPYGIDESMNKLVRTYGEINPNALNKQHFELGTKLNLMDFEQTTKISGARFVTLKGDLAKLERALINFMIDVHTKEFDFFEISPPVLVRDNAMYNAGQLPKFTEESFATTKGYRLIPTAEVSLVNIVADTIISREKLPMRYVAYTQCFRSEAGSSGRDTRGMIRLHQFGKVELVSITTPEESQNEHEYITNASETILQKLNLPYRIMLLCTGDMGFAAKKTYDIEVWLPGQKQYREIASCSNCGDFQARRMKARYKEFGSNDTTLVHTLNASGLPIGRTMVAILESYQNEDGSITIPDVLINYMGGLQKITTYSE.

Residue 228 to 230 coordinates L-serine; the sequence is TAE. 259-261 provides a ligand contact to ATP; that stretch reads RSE. Position 282 (glutamate 282) interacts with L-serine. Position 346–349 (346–349) interacts with ATP; that stretch reads EIAS. Serine 382 lines the L-serine pocket.

It belongs to the class-II aminoacyl-tRNA synthetase family. Type-1 seryl-tRNA synthetase subfamily. As to quaternary structure, homodimer. The tRNA molecule binds across the dimer.

Its subcellular location is the cytoplasm. The catalysed reaction is tRNA(Ser) + L-serine + ATP = L-seryl-tRNA(Ser) + AMP + diphosphate + H(+). It carries out the reaction tRNA(Sec) + L-serine + ATP = L-seryl-tRNA(Sec) + AMP + diphosphate + H(+). Its pathway is aminoacyl-tRNA biosynthesis; selenocysteinyl-tRNA(Sec) biosynthesis; L-seryl-tRNA(Sec) from L-serine and tRNA(Sec): step 1/1. In terms of biological role, catalyzes the attachment of serine to tRNA(Ser). Is also able to aminoacylate tRNA(Sec) with serine, to form the misacylated tRNA L-seryl-tRNA(Sec), which will be further converted into selenocysteinyl-tRNA(Sec). The sequence is that of Serine--tRNA ligase from Rickettsia canadensis (strain McKiel).